Here is a 211-residue protein sequence, read N- to C-terminus: Small ribosomal subunit protein uS3 (211 aa).

The region spanning 38–106 (LRKFIKKAFY…NIELNIIEVK (69 aa)) is the KH type-2 domain.

This sequence belongs to the universal ribosomal protein uS3 family. As to quaternary structure, part of the 30S ribosomal subunit. Forms a tight complex with proteins S10 and S14.

Functionally, binds the lower part of the 30S subunit head. Binds mRNA in the 70S ribosome, positioning it for translation. The protein is Small ribosomal subunit protein uS3 of Ehrlichia ruminantium (strain Gardel).